The sequence spans 182 residues: ATP synthase subunit b, chloroplastic (182 aa).

The helical transmembrane segment at 33–51 (VLNIAILLSGVIYLGRNFL) threads the bilayer.

This sequence belongs to the ATPase B chain family. As to quaternary structure, F-type ATPases have 2 components, F(1) - the catalytic core - and F(0) - the membrane proton channel. F(1) has five subunits: alpha(3), beta(3), gamma(1), delta(1), epsilon(1). F(0) has four main subunits: a(1), b(1), b'(1) and c(10-14). The alpha and beta chains form an alternating ring which encloses part of the gamma chain. F(1) is attached to F(0) by a central stalk formed by the gamma and epsilon chains, while a peripheral stalk is formed by the delta, b and b' chains.

The protein resides in the plastid. It is found in the chloroplast thylakoid membrane. F(1)F(0) ATP synthase produces ATP from ADP in the presence of a proton or sodium gradient. F-type ATPases consist of two structural domains, F(1) containing the extramembraneous catalytic core and F(0) containing the membrane proton channel, linked together by a central stalk and a peripheral stalk. During catalysis, ATP synthesis in the catalytic domain of F(1) is coupled via a rotary mechanism of the central stalk subunits to proton translocation. In terms of biological role, component of the F(0) channel, it forms part of the peripheral stalk, linking F(1) to F(0). This Guillardia theta (Cryptophyte) protein is ATP synthase subunit b, chloroplastic.